The primary structure comprises 115 residues: Large ribosomal subunit protein bL19 (115 aa).

This sequence belongs to the bacterial ribosomal protein bL19 family.

Its function is as follows. This protein is located at the 30S-50S ribosomal subunit interface and may play a role in the structure and function of the aminoacyl-tRNA binding site. The protein is Large ribosomal subunit protein bL19 of Lactobacillus delbrueckii subsp. bulgaricus (strain ATCC BAA-365 / Lb-18).